The primary structure comprises 456 residues: UDP-N-acetylmuramate--L-alanine ligase (456 aa).

112-118 (GTHGKTT) provides a ligand contact to ATP.

The protein belongs to the MurCDEF family.

Its subcellular location is the cytoplasm. The catalysed reaction is UDP-N-acetyl-alpha-D-muramate + L-alanine + ATP = UDP-N-acetyl-alpha-D-muramoyl-L-alanine + ADP + phosphate + H(+). The protein operates within cell wall biogenesis; peptidoglycan biosynthesis. In terms of biological role, cell wall formation. The protein is UDP-N-acetylmuramate--L-alanine ligase of Trichlorobacter lovleyi (strain ATCC BAA-1151 / DSM 17278 / SZ) (Geobacter lovleyi).